The chain runs to 407 residues: Glucose-1-phosphate adenylyltransferase 2 (407 aa).

Alpha-D-glucose 1-phosphate is bound by residues Tyr-97, Gly-162, 177–178 (EK), and Ser-195.

This sequence belongs to the bacterial/plant glucose-1-phosphate adenylyltransferase family. As to quaternary structure, homotetramer.

The catalysed reaction is alpha-D-glucose 1-phosphate + ATP + H(+) = ADP-alpha-D-glucose + diphosphate. The protein operates within glycan biosynthesis; glycogen biosynthesis. In terms of biological role, involved in the biosynthesis of ADP-glucose, a building block required for the elongation reactions to produce glycogen. Catalyzes the reaction between ATP and alpha-D-glucose 1-phosphate (G1P) to produce pyrophosphate and ADP-Glc. The chain is Glucose-1-phosphate adenylyltransferase 2 from Vibrio cholerae serotype O1 (strain ATCC 39315 / El Tor Inaba N16961).